The chain runs to 440 residues: Beta-1,3-galactosyl-O-glycosyl-glycoprotein beta-1,6-N-acetylglucosaminyltransferase 3 (440 aa).

At 1 to 12 (MKMTGWKKKLCR) the chain is on the cytoplasmic side. The chain crosses the membrane as a helical; Signal-anchor for type II membrane protein span at residues 13 to 30 (GHHLWALGCYSLLAVVAL). Topologically, residues 31–440 (RLSLRLKCDV…RHKAIYGTEL (410 aa)) are lumenal. 4 cysteine pairs are disulfide-bonded: cysteine 73–cysteine 230, cysteine 164–cysteine 384, cysteine 185–cysteine 212, and cysteine 393–cysteine 425. N-linked (GlcNAc...) asparagine glycosylation occurs at asparagine 108.

It belongs to the glycosyltransferase 14 family. Post-translationally, N-glycosylated.

It is found in the golgi apparatus membrane. The catalysed reaction is a 3-O-[beta-D-galactosyl-(1-&gt;3)-N-acetyl-alpha-D-galactosaminyl]-L-seryl-[protein] + UDP-N-acetyl-alpha-D-glucosamine = 3-O-{beta-D-galactosyl-(1-&gt;3)-[N-acetyl-beta-D-glucosaminyl-(1-&gt;6)]-N-acetyl-alpha-D-galactosaminyl}-L-seryl-[protein] + UDP + H(+). It carries out the reaction a 3-O-[beta-D-galactosyl-(1-&gt;3)-N-acetyl-alpha-D-galactosaminyl]-L-threonyl-[protein] + UDP-N-acetyl-alpha-D-glucosamine = a 3-O-{beta-D-galactosyl-(1-&gt;3)-[N-acetyl-beta-D-glucosaminyl-(1-&gt;6)]-N-acetyl-alpha-D-galactosaminyl}-L-threonyl-[protein] + UDP + H(+). The enzyme catalyses a beta-D-Gal-(1-&gt;4)-beta-D-GlcNAc-(1-&gt;3)-beta-D-Gal-(1-&gt;4)-beta-D-GlcNAc derivative + UDP-N-acetyl-alpha-D-glucosamine = a beta-D-Gal-(1-&gt;4)-beta-D-GlcNAc-(1-&gt;3)-[beta-D-GlcNAc-(1-&gt;6)]-beta-D-Gal-(1-&gt;4)-N-acetyl-beta-D-glucosaminyl derivative + UDP + H(+). It catalyses the reaction 3-O-[N-acetyl-beta-D-glucosaminyl-(1-&gt;3)-N-acetyl-alpha-D-galactosaminyl]-L-seryl-[protein] + UDP-N-acetyl-alpha-D-glucosamine = 3-O-[N-acetyl-beta-D-glucosaminyl-(1-&gt;3)-[N-acetyl-beta-D-glucosaminyl-(1-&gt;6)]-N-acetyl-alpha-D-galactosaminyl]-L-seryl-[protein] + UDP + H(+). The catalysed reaction is a 3-O-[N-acetyl-beta-D-glucosaminyl-(1-&gt;3)-N-acetyl-alpha-D-galactosaminyl]-L-threonyl-[protein] + UDP-N-acetyl-alpha-D-glucosamine = 3-O-[N-acetyl-beta-D-glucosaminyl-(1-&gt;3)-[N-acetyl-beta-D-glucosaminyl-(1-&gt;6)]-N-acetyl-alpha-D-galactosaminyl]-L-threonyl-[protein] + UDP + H(+). It participates in protein modification; protein glycosylation. Glycosyltransferase that can synthesize all known mucin beta 6 N-acetylglucosaminides. Mediates core 2 and core 4 O-glycan branching, 2 important steps in mucin-type biosynthesis. Also has I-branching enzyme activity by converting linear into branched poly-N-acetyllactosaminoglycans, leading to introduce the blood group I antigen during embryonic development. The polypeptide is Beta-1,3-galactosyl-O-glycosyl-glycoprotein beta-1,6-N-acetylglucosaminyltransferase 3 (GCNT3) (Bos mutus grunniens (Wild yak)).